The sequence spans 72 residues: Large ribosomal subunit protein uL29 (72 aa).

Belongs to the universal ribosomal protein uL29 family.

This is Large ribosomal subunit protein uL29 from Prochlorococcus marinus (strain MIT 9301).